The primary structure comprises 305 residues: Glycine betaine-binding protein YehZ (305 aa).

Residues 1–23 (MPLLKLWAGSLVMLAAVSLPLQA) form the signal peptide.

Belongs to the OsmX family. In terms of assembly, the complex is composed of two ATP-binding proteins (YehX), two transmembrane proteins (YehW and YehY) and a solute-binding protein (YehZ).

The protein resides in the periplasm. Part of an ABC transporter complex involved in low-affinity glycine betaine uptake. Binds glycine betaine with low affinity. This Escherichia coli (strain K12) protein is Glycine betaine-binding protein YehZ (yehZ).